A 609-amino-acid chain; its full sequence is UvrABC system protein C (609 aa).

The 79-residue stretch at 16 to 94 folds into the GIY-YIG domain; it reads SSAGVYRMYD…IKQYMPKYNV (79 aa). Residues 203–238 form the UVR domain; it reads QQVISALVDKMELAAERQAYEQAARFRDQIMALRKV.

The protein belongs to the UvrC family. Interacts with UvrB in an incision complex.

The protein localises to the cytoplasm. Functionally, the UvrABC repair system catalyzes the recognition and processing of DNA lesions. UvrC both incises the 5' and 3' sides of the lesion. The N-terminal half is responsible for the 3' incision and the C-terminal half is responsible for the 5' incision. This Shewanella baltica (strain OS195) protein is UvrABC system protein C.